The primary structure comprises 1090 residues: Leucine--tRNA ligase, cytoplasmic (1090 aa).

At Ser-2 the chain carries N-acetylserine. Positions 66–76 match the 'HIGH' region motif; it reads PYMNGVMHAGH. Phosphothreonine is present on Thr-142. The 'KMSKS' region signature appears at 729–733; it reads KMSKS. Lys-732 lines the ATP pocket.

It belongs to the class-I aminoacyl-tRNA synthetase family.

Its subcellular location is the cytoplasm. The enzyme catalyses tRNA(Leu) + L-leucine + ATP = L-leucyl-tRNA(Leu) + AMP + diphosphate. In Saccharomyces cerevisiae (strain ATCC 204508 / S288c) (Baker's yeast), this protein is Leucine--tRNA ligase, cytoplasmic (CDC60).